Here is a 321-residue protein sequence, read N- to C-terminus: o-succinylbenzoate synthase (321 aa).

The Proton donor role is filled by Lys134. Residues Asp162, Glu191, and Asp214 each contribute to the Mg(2+) site. Lys236 serves as the catalytic Proton acceptor.

Belongs to the mandelate racemase/muconate lactonizing enzyme family. MenC type 1 subfamily. It depends on a divalent metal cation as a cofactor.

The enzyme catalyses (1R,6R)-6-hydroxy-2-succinyl-cyclohexa-2,4-diene-1-carboxylate = 2-succinylbenzoate + H2O. Its pathway is quinol/quinone metabolism; 1,4-dihydroxy-2-naphthoate biosynthesis; 1,4-dihydroxy-2-naphthoate from chorismate: step 4/7. It participates in quinol/quinone metabolism; menaquinone biosynthesis. In terms of biological role, converts 2-succinyl-6-hydroxy-2,4-cyclohexadiene-1-carboxylate (SHCHC) to 2-succinylbenzoate (OSB). The polypeptide is o-succinylbenzoate synthase (Enterobacter sp. (strain 638)).